Consider the following 108-residue polypeptide: Insulin (108 aa).

The N-terminal stretch at 1–24 (MALWTRLLPLLALLALWAPAPAQA) is a signal peptide. 3 cysteine pairs are disulfide-bonded: Cys-31–Cys-94, Cys-43–Cys-107, and Cys-93–Cys-98. Residues 57 to 85 (EAENPQAGAVELGGGLGGLQALALEGPPQ) constitute a propeptide, c peptide.

Belongs to the insulin family. Heterodimer of a B chain and an A chain linked by two disulfide bonds.

Its subcellular location is the secreted. Its function is as follows. Insulin decreases blood glucose concentration. It increases cell permeability to monosaccharides, amino acids and fatty acids. It accelerates glycolysis, the pentose phosphate cycle, and glycogen synthesis in liver. The protein is Insulin (INS) of Sus scrofa (Pig).